Consider the following 354-residue polypeptide: Galectin-9 (354 aa).

2 Galectin domains span residues phenylalanine 17–glutamine 147 and phenylalanine 226–threonine 354. A beta-D-galactoside is bound by residues asparagine 47, histidine 60, arginine 64, asparagine 74, tryptophan 81–lysine 87, histidine 266, arginine 270, threonine 280, and tryptophan 286–serine 292.

As to expression, the isoform Long is expressed exclusively in the small intestine.

Its subcellular location is the cytoplasm. The protein localises to the nucleus. It localises to the secreted. Functionally, binds galactosides. Has high affinity for the Forssman pentasaccharide. Ligand for HAVCR2/TIM3. Binding to HAVCR2 induces T-helper type 1 lymphocyte (Th1) death. Also stimulates bactericidal activity in infected macrophages by causing macrophage activation and IL1B secretion which restricts intracellular bacterial growth. Ligand for P4HB; the interaction retains P4HB at the cell surface of Th2 T helper cells, increasing disulfide reductase activity at the plasma membrane, altering the plasma membrane redox state and enhancing cell migration. Ligand for CD44; the interaction enhances binding of SMAD3 to the FOXP3 promoter, leading to up-regulation of FOXP3 expression and increased induced regulatory T (iTreg) cell stability and suppressive function. Promotes ability of mesenchymal stromal cells to suppress T-cell proliferation. Expands regulatory T-cells and induces cytotoxic T-cell apoptosis following virus infection. Activates ERK1/2 phosphorylation inducing cytokine (IL-6, IL-8, IL-12) and chemokine (CCL2) production in mast and dendritic cells. Inhibits degranulation and induces apoptosis of mast cells. Induces maturation and migration of dendritic cells. Inhibits natural killer (NK) cell function. Can transform NK cell phenotype from peripheral to decidual during pregnancy. Astrocyte derived galectin-9 enhances microglial TNF production. May play a role in thymocyte-epithelial interactions relevant to the biology of the thymus. May provide the molecular basis for urate flux across cell membranes, allowing urate that is formed during purine metabolism to efflux from cells and serving as an electrogenic transporter that plays an important role in renal and gastrointestinal urate excretion. Highly selective to the anion urate. This is Galectin-9 (Lgals9) from Rattus norvegicus (Rat).